A 62-amino-acid polypeptide reads, in one-letter code: Photosystem II reaction center protein Z (62 aa).

2 consecutive transmembrane segments (helical) span residues 8 to 28 (AVFA…VVFA) and 41 to 61 (FSGT…NSLI).

Belongs to the PsbZ family. PSII is composed of 1 copy each of membrane proteins PsbA, PsbB, PsbC, PsbD, PsbE, PsbF, PsbH, PsbI, PsbJ, PsbK, PsbL, PsbM, PsbT, PsbY, PsbZ, Psb30/Ycf12, at least 3 peripheral proteins of the oxygen-evolving complex and a large number of cofactors. It forms dimeric complexes.

The protein localises to the plastid. The protein resides in the chloroplast thylakoid membrane. May control the interaction of photosystem II (PSII) cores with the light-harvesting antenna, regulates electron flow through the 2 photosystem reaction centers. PSII is a light-driven water plastoquinone oxidoreductase, using light energy to abstract electrons from H(2)O, generating a proton gradient subsequently used for ATP formation. This Nymphaea alba (White water-lily) protein is Photosystem II reaction center protein Z.